We begin with the raw amino-acid sequence, 662 residues long: Translation factor GUF1, mitochondrial (662 aa).

The N-terminal 28 residues, 1–28, are a transit peptide targeting the mitochondrion; the sequence is MYIHSSRTVLARYGSRTPLLRPSVLGRY. The 183-residue stretch at 62-244 folds into the tr-type G domain; the sequence is ENYRNFSIVA…AIVDHIPAPD (183 aa). GTP contacts are provided by residues 71-78, 137-141, and 191-194; these read AHVDHGKS, DTPGH, and NKID.

The protein belongs to the TRAFAC class translation factor GTPase superfamily. Classic translation factor GTPase family. LepA subfamily.

It localises to the mitochondrion inner membrane. It carries out the reaction GTP + H2O = GDP + phosphate + H(+). In terms of biological role, promotes mitochondrial protein synthesis. May act as a fidelity factor of the translation reaction, by catalyzing a one-codon backward translocation of tRNAs on improperly translocated ribosomes. Binds to mitochondrial ribosomes in a GTP-dependent manner. In Meyerozyma guilliermondii (strain ATCC 6260 / CBS 566 / DSM 6381 / JCM 1539 / NBRC 10279 / NRRL Y-324) (Yeast), this protein is Translation factor GUF1, mitochondrial.